Consider the following 289-residue polypeptide: Inorganic pyrophosphatase (289 aa).

Serine 2 is modified (N-acetylserine). Lysine 57 is subject to N6-acetyllysine. 3 residues coordinate Mg(2+): aspartate 116, aspartate 121, and aspartate 153. Lysine 228 is subject to N6-acetyllysine. Serine 250 bears the Phosphoserine mark.

It belongs to the PPase family. As to quaternary structure, homodimer. Mg(2+) serves as cofactor.

Its subcellular location is the cytoplasm. The catalysed reaction is diphosphate + H2O = 2 phosphate + H(+). The protein is Inorganic pyrophosphatase (PPA1) of Pongo abelii (Sumatran orangutan).